The chain runs to 704 residues: Non-sulfated chondroitin lyase E66 (704 aa).

Positions 1–23 are cleaved as a signal peptide; it reads MSIVLIIVIVVIFLICFLYLSNS. Catalysis depends on proton acceptor residues Asn-236 and His-291. Tyr-299 (proton donor) is an active-site residue.

This sequence belongs to the baculoviridae E66 family.

The protein localises to the virion membrane. Its subcellular location is the host nucleus. The protein resides in the host cytoplasm. In terms of biological role, component of the polyhedra envelope. Plays an essential role in oral infectivity. May digest, with its chondroitin lyase activity, the chondroitin sulfate barrier of the peritrophic matrix of the host midgut to facilitate viral infection in the epithelial cells. This Lepidoptera (butterflies and moths) protein is Non-sulfated chondroitin lyase E66 (P79).